The sequence spans 999 residues: Hypoxia up-regulated protein 1 (999 aa).

The signal sequence occupies residues 1–32; the sequence is MAATVRRQRPRRLLCWALVAVLLADLLALSDT. Asparagine 155, asparagine 222, and asparagine 515 each carry an N-linked (GlcNAc...) asparagine glycan. The segment at 564-694 is disordered; sequence VEDSPEEEST…KKQKPARKQK (131 aa). Serine 567 is modified (phosphoserine). Over residues 574–583 the composition is skewed to polar residues; sequence LTKLGNTISS. The N-linked (GlcNAc...) asparagine glycan is linked to asparagine 596. 2 stretches are compositionally biased toward basic and acidic residues: residues 611-626 and 641-668; these read GSKDEPAEQGELKEEA and PKGDAAREGETPDEKESGDKSEAQKPNE. 3 N-linked (GlcNAc...) asparagine glycosylation sites follow: asparagine 830, asparagine 862, and asparagine 869. An N6-acetyllysine modification is found at lysine 883. The interval 909-999 is disordered; it reads AKFTKPRPRP…QKRPLKNDEL (91 aa). N-linked (GlcNAc...) asparagine glycosylation is found at asparagine 922 and asparagine 931. Residues 949–962 show a composition bias toward basic and acidic residues; that stretch reads EEAKAILEPDKEGL. The short motif at 996–999 is the Prevents secretion from ER element; it reads NDEL.

The protein belongs to the heat shock protein 70 family. In terms of assembly, part of a large chaperone multiprotein complex comprising DNAJB11, HSP90B1, HSPA5, HYOU, PDIA2, PDIA4, PDIA6, PPIB, SDF2L1, UGGT1 and very small amounts of ERP29, but not, or at very low levels, CALR nor CANX. Selectively expressed by cultured astrocytes but not endothelial cells, microglia or neurons.

The protein resides in the endoplasmic reticulum lumen. Its function is as follows. Has a pivotal role in cytoprotective cellular mechanisms triggered by oxygen deprivation. Promotes HSPA5/BiP-mediated ATP nucleotide exchange and thereby activates the unfolded protein response (UPR) pathway in the presence of endoplasmic reticulum stress. May play a role as a molecular chaperone and participate in protein folding. This chain is Hypoxia up-regulated protein 1 (Hyou1), found in Rattus norvegicus (Rat).